A 119-amino-acid chain; its full sequence is MGVYTFVCRSSGDEWTAKQLKGELEASAATPYELQRRLVAAASAADSAAGVQSSFSMVSPSSAVFQVIIGAVGGGAAIGGGAAAGAASGGAAAEAPKAEEKKEEEKEESEDDLGFSLFD.

The disordered stretch occupies residues 81-119; it reads GAAAGAASGGAAAEAPKAEEKKEEEKEESEDDLGFSLFD. A compositionally biased stretch (low complexity) spans 84–95; that stretch reads AGAASGGAAAEA.

Belongs to the eukaryotic ribosomal protein P1/P2 family. Post-translationally, phosphorylated.

Functionally, plays an important role in the elongation step of protein synthesis. The polypeptide is Large ribosomal subunit protein P3 (Oryza sativa subsp. japonica (Rice)).